Here is a 146-residue protein sequence, read N- to C-terminus: Large ribosomal subunit protein uL15 (146 aa).

Residues 1–64 (MQLNTIKPAI…MPMHRRLPKR (64 aa)) form a disordered region. A compositionally biased stretch (basic residues) spans 30-39 (TATKGHKGQK).

Belongs to the universal ribosomal protein uL15 family. Part of the 50S ribosomal subunit.

Binds to the 23S rRNA. The polypeptide is Large ribosomal subunit protein uL15 (Geobacter sp. (strain M21)).